The primary structure comprises 281 residues: Transmembrane protein 163 (281 aa).

Over 1 to 80 (MEPLDTELCY…HEAQNYRKKA (80 aa)) the chain is Cytoplasmic. Positions 16 to 44 (IVQPSCNGQTPPGHRTLSPTQQMDHEQQM) are disordered. A helical transmembrane segment spans residues 81 to 101 (LWVSWLSIAITLILAIAAFTV). Over 102–108 (SVMRYSA) the chain is Extracellular. The chain crosses the membrane as a helical span at residues 109–129 (SSFGFALDAVLDVLSSAIVLW). Topologically, residues 130-145 (RYSNAAAVHSAHREYM) are cytoplasmic. A helical transmembrane segment spans residues 146–166 (ACCILGVIFLLSSICIVSKAI). Residues 167 to 179 (HDLSIRVMPEVDG) are Extracellular-facing. Residues 180–200 (FLFSVSILSGILCSLLAAIKF) traverse the membrane as a helical segment. Over 201 to 209 (MLGKVLTSR) the chain is Cytoplasmic. Residues 210 to 230 (ALITDGFNSLVGGIMGFSILL) traverse the membrane as a helical segment. The Extracellular segment spans residues 231 to 240 (SAEVYKHNSK). The helical transmembrane segment at 241-261 (VWYLDGSVGILIGLIIMSYGI) threads the bilayer. The Cytoplasmic segment spans residues 262–281 (KLLMDMVPRVRQTRHYEMFE).

The protein belongs to the TMEM163 family.

The protein localises to the cytoplasmic vesicle. It is found in the secretory vesicle. It localises to the synaptic vesicle membrane. Its subcellular location is the early endosome membrane. May bind zinc and other divalent cations and recruit them to vesicular organelles. This chain is Transmembrane protein 163 (tmem163), found in Xenopus laevis (African clawed frog).